The primary structure comprises 199 residues: Dephospho-CoA kinase (199 aa).

One can recognise a DPCK domain in the interval 4-199 (VIGLTGGIAS…DNVLQKWNIS (196 aa)). 12–17 (ASGKST) is an ATP binding site.

Belongs to the CoaE family.

The protein localises to the cytoplasm. It catalyses the reaction 3'-dephospho-CoA + ATP = ADP + CoA + H(+). Its pathway is cofactor biosynthesis; coenzyme A biosynthesis; CoA from (R)-pantothenate: step 5/5. Catalyzes the phosphorylation of the 3'-hydroxyl group of dephosphocoenzyme A to form coenzyme A. In Oceanobacillus iheyensis (strain DSM 14371 / CIP 107618 / JCM 11309 / KCTC 3954 / HTE831), this protein is Dephospho-CoA kinase.